A 167-amino-acid chain; its full sequence is NADH-quinone oxidoreductase subunit I 1 (167 aa).

4Fe-4S ferredoxin-type domains follow at residues 58–88 and 98–127; these read LRRY…IDAE and TRYD…EGPN. C68, C71, C74, C78, C107, C110, C113, and C117 together coordinate [4Fe-4S] cluster.

It belongs to the complex I 23 kDa subunit family. In terms of assembly, NDH-1 is composed of 14 different subunits. Subunits NuoA, H, J, K, L, M, N constitute the membrane sector of the complex. [4Fe-4S] cluster serves as cofactor.

It localises to the cell inner membrane. It carries out the reaction a quinone + NADH + 5 H(+)(in) = a quinol + NAD(+) + 4 H(+)(out). Its function is as follows. NDH-1 shuttles electrons from NADH, via FMN and iron-sulfur (Fe-S) centers, to quinones in the respiratory chain. The immediate electron acceptor for the enzyme in this species is believed to be ubiquinone. Couples the redox reaction to proton translocation (for every two electrons transferred, four hydrogen ions are translocated across the cytoplasmic membrane), and thus conserves the redox energy in a proton gradient. In Cereibacter sphaeroides (strain ATCC 17029 / ATH 2.4.9) (Rhodobacter sphaeroides), this protein is NADH-quinone oxidoreductase subunit I 1.